Here is a 325-residue protein sequence, read N- to C-terminus: Bifunctional ligase/repressor BirA (325 aa).

Positions 23–42 (GQKISDALGCSRTAVWKHIE) form a DNA-binding region, H-T-H motif. Residues 74–262 (RFGLKTEVMG…CFEKRYRDYM (189 aa)) enclose the BPL/LPL catalytic domain. Biotin is bound by residues Q118, 122–124 (RGR), and K189.

This sequence belongs to the biotin--protein ligase family.

It catalyses the reaction biotin + L-lysyl-[protein] + ATP = N(6)-biotinyl-L-lysyl-[protein] + AMP + diphosphate + H(+). In terms of biological role, acts both as a biotin--[acetyl-CoA-carboxylase] ligase and a repressor. This is Bifunctional ligase/repressor BirA from Bacillus spizizenii (strain ATCC 23059 / NRRL B-14472 / W23) (Bacillus subtilis subsp. spizizenii).